Reading from the N-terminus, the 590-residue chain is Aspartate--tRNA(Asp/Asn) ligase (590 aa).

L-aspartate is bound at residue glutamate 175. The interval 199–202 (QQYK) is aspartate. L-aspartate is bound by residues arginine 221 and histidine 450. An ATP-binding site is contributed by 221–223 (RDE). Position 484 (glutamate 484) interacts with ATP. Arginine 491 is a binding site for L-aspartate. Residue 536–539 (GVDR) participates in ATP binding.

Belongs to the class-II aminoacyl-tRNA synthetase family. Type 1 subfamily. Homodimer.

The protein resides in the cytoplasm. The enzyme catalyses tRNA(Asx) + L-aspartate + ATP = L-aspartyl-tRNA(Asx) + AMP + diphosphate. Functionally, aspartyl-tRNA synthetase with relaxed tRNA specificity since it is able to aspartylate not only its cognate tRNA(Asp) but also tRNA(Asn). Reaction proceeds in two steps: L-aspartate is first activated by ATP to form Asp-AMP and then transferred to the acceptor end of tRNA(Asp/Asn). In Rhodopseudomonas palustris (strain BisA53), this protein is Aspartate--tRNA(Asp/Asn) ligase.